Reading from the N-terminus, the 1002-residue chain is MLMKQTFLYFLLTCVVSAQFNGYVPPEQNGGDIVVPKDFYEKFGEDFIREQEESSAPLMNPVPERDEAEAPHHPKGHHEFNDDFEDDTALEHPGFKDKLDSFLQPARDFLHTVSDRLDNIFDDDEDEHVREKRPHDSADEDAPRRKHGKCKGKGKHHKGKHAKGKGKKSHPKPEDDSVFFDDERPKHHEFDDEDREFPAHHEPGEHMPPPPMHHKPGEHMPPPPMHHEPGEHMPPPPMHHEPGEHMPPPPMHHEPGEHMPPPPMHHEPGEHMPPPPMHHEPGEHMPPPPMHHEPGEHMPPPPMHHEPGEHMPPPPMHHEPGEHMPPPPMHHEPGEHMPPPPFKHHELEEHEGPEHHRGPEDKEHHKGPKDKEHHKGPKDKEHHKGPKDKEHHKGPKDKEHHKGPKDKEHHKGPKDKEHHQGPKEKHNERPEQNMQSSHELLVIEAFADLINSVPVEEIAEEFSRFLDTLGIEYYGNIPVHIQENAPKDSSIPPLFEFDDDLELSDLTPEQFAYLEMLKAEGIDPMTAFRDQSHPAKPSNAQPADSSRPYAVFSQEENGEHVNLKAFPDHTLRVKDSKPESLGIDTVKQYTGYLDVEDDRHLFFWFFESRNDPENDPVVLWLNGGPGCSSLTGLFMELGPSSINIETLKPEYNPHSWNSNASVIFLDQPINTGFSNGDDSVLDTVTAGKDVYAFLNLFFAKFPQYAHLDFHIAGESYAGHYIPQFAKEIMEHNQGANFFVASGYEMEKQYINLKSVLIGNGLTDPLVQYYFYGKMACESPYGPIMSQEECDRITGAYDTCAKLITGCYQTGFTPVCIGASLYCNNAMIGPFTKTGLNIYDIREECRDQEHLCYPETGAIESYLNQEFVQEALGVEYDYKGCNTEVNIGFLFKGDWMRKTFRDDVTAILEAGLPVLIYAGDADYICNYMGNEAWTDALEWAGQREFYEAELKPWSPNGKEAGRGKSFKNFGYLRLYEAGHMVPFNQPEASLEMLNSWIDGSLFA.

The signal sequence occupies residues M1–A18. The propeptide occupies Q19–G521. Disordered regions lie at residues Q51–E91, D124–S436, and A527–S546. Composition is skewed to basic and acidic residues over residues P63 to N81 and E127 to P143. Residues R144–H170 are compositionally biased toward basic residues. A compositionally biased stretch (basic and acidic residues) spans P171–E205. 15 repeat units span residues M225 to P237, M238 to P250, M251 to P263, M264 to P276, M277 to P289, M290 to P302, M303 to P315, M316 to P328, M329 to P341, D361 to K369, D370 to K378, D379 to K387, D388 to K396, D397 to K405, and D406 to K414. Residues M225 to P341 are 9 X 13 AA tandem repeats of M-H-H-E-P-G-E-H-M-P-P-P-P. Over residues K343 to E431 the composition is skewed to basic and acidic residues. The interval D361–K423 is 7 X 9 AA tandem repeats of D-K-E-H-H-K-G-P-K. A 2-7; approximate repeat occupies D415–K423. Intrachain disulfides connect C627-C880, C776-C789, C799-C822, C806-C815, and C844-C851. N659 carries an N-linked (GlcNAc...) asparagine glycan. S715 is an active-site residue. Residue D921 is part of the active site. C924 is a substrate binding site. H978 is a catalytic residue. Residue M979 coordinates substrate.

The protein belongs to the peptidase S10 family. In terms of assembly, heterodimer of two subunits of 32 kDa and 19 kDa derived from the precursor protein and linked by a disulfide bond.

The protein localises to the vacuole. The enzyme catalyses Release of a C-terminal amino acid with broad specificity.. In terms of biological role, involved in degradation of small peptides. Digests preferentially peptides containing an aliphatic or hydrophobic residue in P1' position, as well as methionine, leucine or phenylalanine in P1 position of ester substrate. The polypeptide is Carboxypeptidase Y (cpy1) (Schizosaccharomyces pombe (strain 972 / ATCC 24843) (Fission yeast)).